The following is a 609-amino-acid chain: Numb-like protein (609 aa).

Disordered stretches follow at residues 1–68, 223–283, 372–421, 434–464, and 537–609; these read MSRS…QWQA, GSFR…PVAA, ASAG…EEVS, QQQQ…QPFP, and AGAF…EIEL. Residues 19–29 are compositionally biased toward pro residues; that stretch reads PPAPCGAPGPP. One can recognise a PID domain in the interval 74–223; the sequence is RKGTCSFPVR…ASRTSFAREG (150 aa). Ser-224 and Ser-228 each carry phosphoserine. Residues 233-245 show a composition bias toward basic and acidic residues; the sequence is PAEREAPDKKKAE. A compositionally biased stretch (low complexity) spans 246–259; the sequence is AAAAPTVAPGPAQP. Residue Ser-263 is modified to Phosphoserine. Thr-279 is subject to Phosphothreonine. The span at 409–418 shows a compositional bias: basic and acidic residues; it reads TPSEAERWLE. Ser-411 is modified (phosphoserine). Residues 434-446 are compositionally biased toward low complexity; sequence QQQQQQQQQQQQQ. 2 stretches are compositionally biased toward pro residues: residues 454–464 and 558–573; these read PTMPPALQPFP and NGAP…PAPE.

In terms of assembly, interacts (via PTB domain) with MAP3K7IP2 (via C-terminal). Interacts (via C-terminal) with TRAF6 (via TRAF domains). Associates with EPS15 and NOTCH1.

It is found in the cytoplasm. Its function is as follows. Plays a role in the process of neurogenesis. Required throughout embryonic neurogenesis to maintain neural progenitor cells, also called radial glial cells (RGCs), by allowing their daughter cells to choose progenitor over neuronal cell fate. Not required for the proliferation of neural progenitor cells before the onset of embryonic neurogenesis. Also required postnatally in the subventricular zone (SVZ) neurogenesis by regulating SVZ neuroblasts survival and ependymal wall integrity. Negative regulator of NF-kappa-B signaling pathway. The inhibition of NF-kappa-B activation is mediated at least in part, by preventing MAP3K7IP2 to interact with polyubiquitin chains of TRAF6 and RIPK1 and by stimulating the 'Lys-48'-linked polyubiquitination and degradation of TRAF6 in cortical neurons. In Homo sapiens (Human), this protein is Numb-like protein (NUMBL).